The primary structure comprises 500 residues: Protein nucleotidyltransferase YdiU (500 aa).

ATP-binding residues include G98, G100, R101, K124, D136, G137, R187, and R194. Catalysis depends on D263, which acts as the Proton acceptor. Mg(2+) is bound by residues N264 and D273. Residue D273 participates in ATP binding.

This sequence belongs to the SELO family. The cofactor is Mg(2+). Requires Mn(2+) as cofactor.

It carries out the reaction L-seryl-[protein] + ATP = 3-O-(5'-adenylyl)-L-seryl-[protein] + diphosphate. The catalysed reaction is L-threonyl-[protein] + ATP = 3-O-(5'-adenylyl)-L-threonyl-[protein] + diphosphate. The enzyme catalyses L-tyrosyl-[protein] + ATP = O-(5'-adenylyl)-L-tyrosyl-[protein] + diphosphate. It catalyses the reaction L-histidyl-[protein] + UTP = N(tele)-(5'-uridylyl)-L-histidyl-[protein] + diphosphate. It carries out the reaction L-seryl-[protein] + UTP = O-(5'-uridylyl)-L-seryl-[protein] + diphosphate. The catalysed reaction is L-tyrosyl-[protein] + UTP = O-(5'-uridylyl)-L-tyrosyl-[protein] + diphosphate. Functionally, nucleotidyltransferase involved in the post-translational modification of proteins. It can catalyze the addition of adenosine monophosphate (AMP) or uridine monophosphate (UMP) to a protein, resulting in modifications known as AMPylation and UMPylation. The polypeptide is Protein nucleotidyltransferase YdiU (Herminiimonas arsenicoxydans).